The primary structure comprises 274 residues: MSVQSAIKRKTAPEIRARKGGDPVVMLTSYHAHTAALVDRYCDVILVGDSLGNVMHGFETTVPVTLDMMILQGRAVMRGSKEALVVVDMPFGSYEASKEQAFHSAVRIMKESLCGAVKLEGGVKMAETIRFLSERGVPVMGHIGLTPQSINTLGSFRAQGREESNWAPIEADARAVAEAGAFSVVIEAVAEPLARKITADIAIPTIGIGASAACDGQVLVLEDMLGLSPWAPKFVKRFGDLGPGIEAAIKDYADEVRSRAFPGPEHVYGMKAKS.

Residues Asp-49 and Asp-88 each coordinate Mg(2+). Residues 49-50 (DS), Asp-88, and Lys-118 contribute to the 3-methyl-2-oxobutanoate site. Glu-120 lines the Mg(2+) pocket. Glu-187 functions as the Proton acceptor in the catalytic mechanism.

This sequence belongs to the PanB family. In terms of assembly, homodecamer; pentamer of dimers. Mg(2+) is required as a cofactor.

The protein localises to the cytoplasm. It catalyses the reaction 3-methyl-2-oxobutanoate + (6R)-5,10-methylene-5,6,7,8-tetrahydrofolate + H2O = 2-dehydropantoate + (6S)-5,6,7,8-tetrahydrofolate. It functions in the pathway cofactor biosynthesis; (R)-pantothenate biosynthesis; (R)-pantoate from 3-methyl-2-oxobutanoate: step 1/2. Functionally, catalyzes the reversible reaction in which hydroxymethyl group from 5,10-methylenetetrahydrofolate is transferred onto alpha-ketoisovalerate to form ketopantoate. This Rhodopseudomonas palustris (strain BisB18) protein is 3-methyl-2-oxobutanoate hydroxymethyltransferase.